The primary structure comprises 88 residues: YcgL domain-containing protein CGSHiGG_01115 (88 aa).

A YcgL domain is found at 1-85 (MLCAIYKSKK…QDDGLFNSLS (85 aa)).

The chain is YcgL domain-containing protein CGSHiGG_01115 from Haemophilus influenzae (strain PittGG).